Consider the following 760-residue polypeptide: MAESKCPFKSQGSRSNVAGGGTRNTDWWPEQLKLNILRQHTTVTNPLGADFDYAAAFNTLDYDALKKDLTALMTDSQEWWPADFGHYGGLFIRMAWHSAGTYRVFDGRGGAGQGQQRFAPLNSWPDNVSLDKARRLLWPIKQKYGDKISWADLMILTGNVALESMGFKTFGFAGGRADTWEADESAYWGRETTWLGNDARYEKGFSGSDKQGTVIADEASHKTTHSRELENPLAAAHMGLIYVNPEGPDGNPDPVAAAHDIRVTFGRMAMNDEETVALIAGGHTFGKTHGAAPADNVGKEPEAAGLEAQGLGWQNSHGSGKGPDTITSGLEVTWTKTPTKWSNQFLEYLFKFDWELTKSPAGAHQWVAKNADDIIPDAYDAFKKHKPTMLTTDLSLRFDPAYEKISRRFLENPDQFADAFARAWFKLTHRDMGPRARYLGPEVPGEVLLWQDPIPAVNHALIDTVDTAALKRDVLATGVNPSKFISTAWAAASTFRGSDKRGGANGARIRFAPQRSWEVNNQPWLQESLSALEGVQSRFNASRPDRKQVSLADLIVLAGCAAVEQAAHDAGFPVRVPFTPGRMDASQDETDVESFSHMEPIADGFRNYAKPYVHGRAEHYLVDKAQLLNLSAPEMTVLVGGLRVLNTNYDGSAHGVFTSRPGVLSNDFFVNLLDMNTAWQAGHNGEIFEGADRKSGAKKWTATRADLVFGSHAELRAVAEVYASADGQRKFVNDFVAAWNKVMNLDRFDLQGKQFIYPRL.

Residues 1–24 (MAESKCPFKSQGSRSNVAGGGTRN) form a disordered region. Positions 96–242 (WHSAGTYRVF…LAAAHMGLIY (147 aa)) form a cross-link, tryptophyl-tyrosyl-methioninium (Trp-Tyr) (with M-268). Residue H97 is the Proton acceptor of the active site. Positions 242-268 (YVNPEGPDGNPDPVAAAHDIRVTFGRM) form a cross-link, tryptophyl-tyrosyl-methioninium (Tyr-Met) (with W-96). H283 is a heme b binding site.

It belongs to the peroxidase family. Peroxidase/catalase subfamily. In terms of assembly, homodimer or homotetramer. The cofactor is heme b. Formation of the three residue Trp-Tyr-Met cross-link is important for the catalase, but not the peroxidase activity of the enzyme.

It is found in the cytoplasm. The enzyme catalyses H2O2 + AH2 = A + 2 H2O. The catalysed reaction is 2 H2O2 = O2 + 2 H2O. Functionally, bifunctional enzyme with both catalase and broad-spectrum peroxidase activity. This chain is Catalase-peroxidase, found in Aspergillus clavatus (strain ATCC 1007 / CBS 513.65 / DSM 816 / NCTC 3887 / NRRL 1 / QM 1276 / 107).